Here is a 507-residue protein sequence, read N- to C-terminus: Fumarate hydratase, mitochondrial (507 aa).

Residues 1-41 (MYRALRLLARSRRLLRVPSAGAAVSGEATTLPRCAPNVARM) constitute a mitochondrion transit peptide. Residues K58, K63, and K77 each carry the N6-acetyllysine; alternate modification. An N6-succinyllysine; alternate mark is found at K58, K63, and K77. The residue at position 82 (T82) is a Phosphothreonine. An N6-acetyllysine; alternate mark is found at K112 and K119. Residues K112 and K119 each carry the N6-succinyllysine; alternate modification. Residues 142-144 (SGT), 173-176 (HPND), and 183-185 (SSN) each bind substrate. K210 carries the N6-acetyllysine modification. Residue K220 is modified to N6-acetyllysine; alternate. K220 bears the N6-succinyllysine; alternate mark. Position 231 (T231) interacts with substrate. The active-site Proton donor/acceptor is the H232. T233 is modified (phosphothreonine). An N6-acetyllysine; alternate modification is found at K289. The residue at position 289 (K289) is an N6-succinyllysine; alternate. Residue S362 is part of the active site. Residues S363 and 368 to 370 (KVN) contribute to the substrate site. At S363 the chain carries Phosphoserine. N6-succinyllysine occurs at positions 464 and 470. At K499 the chain carries N6-acetyllysine.

The protein belongs to the class-II fumarase/aspartase family. Fumarase subfamily. Homotetramer. Interacts with H2AZ1. Post-translationally, phosphorylation at Thr-233 by PRKDC in response to DNA damage promotes translocation to the nucleus and recruitment to DNA double-strand breaks (DSBs).

It is found in the mitochondrion. Its subcellular location is the cytoplasm. The protein localises to the cytosol. It localises to the nucleus. The protein resides in the chromosome. It catalyses the reaction (S)-malate = fumarate + H2O. Its pathway is carbohydrate metabolism; tricarboxylic acid cycle; (S)-malate from fumarate: step 1/1. In terms of biological role, catalyzes the reversible stereospecific interconversion of fumarate to L-malate. Experiments in different species have demonstrated that specific isoforms of this protein act in defined pathways and favor one direction over the other. Catalyzes the hydration of fumarate to L-malate in the tricarboxylic acid (TCA) cycle to facilitate a transition step in the production of energy in the form of NADH. Functionally, catalyzes the dehydration of L-malate to fumarate. Fumarate metabolism in the cytosol plays a role during urea cycle and arginine metabolism; fumarate being a by-product of the urea cycle and amino-acid catabolism. Also plays a role in DNA repair by promoting non-homologous end-joining (NHEJ). In response to DNA damage and phosphorylation by PRKDC, translocates to the nucleus and accumulates at DNA double-strand breaks (DSBs): acts by catalyzing formation of fumarate, an inhibitor of KDM2B histone demethylase activity, resulting in enhanced dimethylation of histone H3 'Lys-36' (H3K36me2). The polypeptide is Fumarate hydratase, mitochondrial (Mus musculus (Mouse)).